A 222-amino-acid chain; its full sequence is N-acetyltransferase 8B (222 aa).

Topologically, residues 1–42 (MVSYHICEYQDSDYKSVVDVFTKGAEEYIPSTFRHLLLLPRT) are cytoplasmic. The helical; Signal-anchor for type II membrane protein transmembrane segment at 43–67 (LLLLLGVSLALVLVSGSWLLAVVCI) threads the bilayer. The N-acetyltransferase domain occupies 62-217 (LAVVCIFFLL…VGIRFVQLNY (156 aa)). Topologically, residues 68–222 (FFLLPFLWFL…VQLNYSFPSA (155 aa)) are lumenal. The residue at position 99 (Lys-99) is an N6-acetyllysine.

This sequence belongs to the NAT8 family. Acetylation on Lys-99 modulates enzymatic activity.

The protein localises to the endoplasmic reticulum-Golgi intermediate compartment membrane. It is found in the endoplasmic reticulum membrane. The enzyme catalyses L-lysyl-[protein] + acetyl-CoA = N(6)-acetyl-L-lysyl-[protein] + CoA + H(+). Endoplasmic reticulum (ER)-membrane-bound lysine N-acetyltransferase catalyzing the N6-acetylation of lysine residues in the lumen of the ER in various proteins, including PROM1 and BACE1, using acetyl-CoA as acetyl donor. Thereby, may regulate apoptosis through the acetylation and the regulation of the expression of PROM1. Acetylates and stabilizes BACE1 immature protein, leading to increased steady-state levels in neurons. By acting on BACE1 expression, may regulate amyloid beta-peptide formation. N(6)-lysine acetylation in ER maintains protein homeostasis and regulates reticulophagy. The chain is N-acetyltransferase 8B from Rattus norvegicus (Rat).